We begin with the raw amino-acid sequence, 84 residues long: ATP synthase subunit c (84 aa).

2 consecutive transmembrane segments (helical) span residues 9 to 29 and 54 to 74; these read IIAS…GFAI and IVAG…LLFI.

It belongs to the ATPase C chain family. In terms of assembly, F-type ATPases have 2 components, F(1) - the catalytic core - and F(0) - the membrane proton channel. F(1) has five subunits: alpha(3), beta(3), gamma(1), delta(1), epsilon(1). F(0) has three main subunits: a(1), b(2) and c(10-14). The alpha and beta chains form an alternating ring which encloses part of the gamma chain. F(1) is attached to F(0) by a central stalk formed by the gamma and epsilon chains, while a peripheral stalk is formed by the delta and b chains.

It localises to the cell inner membrane. F(1)F(0) ATP synthase produces ATP from ADP in the presence of a proton or sodium gradient. F-type ATPases consist of two structural domains, F(1) containing the extramembraneous catalytic core and F(0) containing the membrane proton channel, linked together by a central stalk and a peripheral stalk. During catalysis, ATP synthesis in the catalytic domain of F(1) is coupled via a rotary mechanism of the central stalk subunits to proton translocation. Its function is as follows. Key component of the F(0) channel; it plays a direct role in translocation across the membrane. A homomeric c-ring of between 10-14 subunits forms the central stalk rotor element with the F(1) delta and epsilon subunits. In Pasteurella multocida (strain Pm70), this protein is ATP synthase subunit c.